A 301-amino-acid chain; its full sequence is D-alanine--D-alanine ligase (301 aa).

One can recognise an ATP-grasp domain in the interval 99-294; the sequence is KSVLEANGIR…FSELIDMIIQ (196 aa). 126–181 contributes to the ATP binding site; it reads INELGYPVVVKPTHGGSSVATFIVKEEKEIENCVSEAFKWDSEVMIEKFIKGDEIT. Residues Asp248, Glu261, and Asn263 each contribute to the Mg(2+) site.

This sequence belongs to the D-alanine--D-alanine ligase family. Requires Mg(2+) as cofactor. The cofactor is Mn(2+).

It is found in the cytoplasm. It carries out the reaction 2 D-alanine + ATP = D-alanyl-D-alanine + ADP + phosphate + H(+). Its pathway is cell wall biogenesis; peptidoglycan biosynthesis. Functionally, cell wall formation. In Clostridium beijerinckii (strain ATCC 51743 / NCIMB 8052) (Clostridium acetobutylicum), this protein is D-alanine--D-alanine ligase.